Reading from the N-terminus, the 538-residue chain is MEIKEISVPQQGVVADYMNGKKEIQSCFDYMLTEDAFKQRLHDLREREFFRQDLVAHLLEYNTKLQAGESTLQNVKALGDENTYVVIAGQQAGLLTGPLYTIHKVISILQLAKEKEESLGVKVVPVFWIAGEDHDMDEINHTFVAKNKKMKKTIFYDRNPKKASASESELSVEDCRNWIEEIFKTYPETNFTKDVLKFVDDALKKSNTYVDFFAHLITKIFANSGLILVDSHHPELRKLEIPFFKRIISKYKEVQEGLRNQQEVIKELGYKPIIETKSHAVHIFMEIDDERVLLEDQQGKFVGKDGAHSFSYEELIEEMERNPARFSNNVVTRPLMQEYVFPTLAFIGGPGELAYWSELQQVFHTVGFQMPPVVPRLTITYVERDIATDLFDLQLRESDPFLNDVDKLRENWLSNQIEEPIDDHFEKAKKEIADIHTSLQQFVKKIEPGLGAFAGKNELKINEQIELLERMLKRNVEKKYEVQLNKFRRIQFALRPLGAPQERVWNVCYYLNQFGLDFVDRVMENPFSWDGKHHVIKL.

Positions 248-268 form a coiled coil; it reads ISKYKEVQEGLRNQQEVIKEL.

It belongs to the BshC family.

Functionally, involved in bacillithiol (BSH) biosynthesis. May catalyze the last step of the pathway, the addition of cysteine to glucosamine malate (GlcN-Mal) to generate BSH. This Bacillus cereus (strain ATCC 14579 / DSM 31 / CCUG 7414 / JCM 2152 / NBRC 15305 / NCIMB 9373 / NCTC 2599 / NRRL B-3711) protein is Putative cysteine ligase BshC.